Reading from the N-terminus, the 335-residue chain is Gibberellin 2-beta-dioxygenase 3 (335 aa).

Positions 175 to 278 (ESDSCLRMNH…RISMIYFAGP (104 aa)) constitute a Fe2OG dioxygenase domain. Residues His202, Asp204, and His259 each contribute to the Fe cation site. Residue Arg269 is part of the active site.

The protein belongs to the iron/ascorbate-dependent oxidoreductase family. GA2OX subfamily. The cofactor is Fe(2+). Not expressed in the apex.

The catalysed reaction is gibberellin A1 + 2-oxoglutarate + O2 = gibberellin A8 + succinate + CO2. It functions in the pathway plant hormone biosynthesis; gibberellin biosynthesis. Its function is as follows. Catalyzes the 2-beta-hydroxylation of several biologically active gibberellins, leading to the homeostatic regulation of their endogenous level. Catabolism of gibberellins (GAs) plays a central role in plant development. Converts GA9/GA20 to GA51/GA29 and GA4/GA1 to GA34/GA8. The polypeptide is Gibberellin 2-beta-dioxygenase 3 (GA2OX3) (Arabidopsis thaliana (Mouse-ear cress)).